The primary structure comprises 95 residues: Acylphosphatase (95 aa).

Positions 6–94 (RVRVIVKGIV…EDFTGFSVRY (89 aa)) constitute an Acylphosphatase-like domain. Active-site residues include Arg21 and Asn39.

This sequence belongs to the acylphosphatase family.

It carries out the reaction an acyl phosphate + H2O = a carboxylate + phosphate + H(+). The protein is Acylphosphatase (acyP) of Caldivirga maquilingensis (strain ATCC 700844 / DSM 13496 / JCM 10307 / IC-167).